A 298-amino-acid chain; its full sequence is KH domain-containing protein At1g09660/At1g09670 (298 aa).

In terms of domain architecture, KH spans 152–219 (DVPVDKYPSY…EHLCEPLHVL (68 aa)). Residues 266–298 (NGTLREESPSPSLSPCLSPSMSPFNSKRAKTEI) are disordered. Residues S273 and S287 each carry the phosphoserine modification. Low complexity predominate over residues 274 to 288 (PSPSLSPCLSPSMSP).

It localises to the nucleus. This is KH domain-containing protein At1g09660/At1g09670 from Arabidopsis thaliana (Mouse-ear cress).